Reading from the N-terminus, the 144-residue chain is Large ribosomal subunit protein uL15 (144 aa).

Residues 1 to 51 form a disordered region; sequence MQLNTLSPAQGEKKSRKRVGRGIGSGIGKTCGSGHKGQKSRSGGFNKIGFE. Residues 21-35 are compositionally biased toward gly residues; sequence RGIGSGIGKTCGSGH.

Belongs to the universal ribosomal protein uL15 family. In terms of assembly, part of the 50S ribosomal subunit.

In terms of biological role, binds to the 23S rRNA. The polypeptide is Large ribosomal subunit protein uL15 (Vesicomyosocius okutanii subsp. Calyptogena okutanii (strain HA)).